Reading from the N-terminus, the 475-residue chain is Ankyrin repeat, SAM and basic leucine zipper domain-containing protein 1 (475 aa).

The segment at 1–22 is disordered; it reads MAAGALRGLPVAGGGESSESED. Phosphoserine occurs at positions 17, 18, and 20. ANK repeat units lie at residues 45–74, 78–107, 110–144, 148–177, 181–210, and 214–243; these read EKKE…SVDS, YGWT…NASF, DKQT…DPNV, RLMT…EVNT, NGYT…NKML, and DGKM…PLEG. Residues 272–334 enclose the SAM domain; that stretch reads SYTAFGDLEV…KILATLKELQ (63 aa).

In terms of assembly, interacts with DDX4, PIWIL1, RANBP9 and TDRD1.

The protein localises to the cytoplasm. In terms of biological role, plays a central role during spermatogenesis by repressing transposable elements and preventing their mobilization, which is essential for the germline integrity. Acts via the piRNA metabolic process, which mediates the repression of transposable elements during meiosis by forming complexes composed of piRNAs and Piwi proteins and governs the methylation and subsequent repression of transposons. Its association with pi-bodies suggests a participation in the primary piRNAs metabolic process. Required prior to the pachytene stage to facilitate the production of multiple types of piRNAs, including those associated with repeats involved in the regulation of retrotransposons. May act by mediating protein-protein interactions during germ cell maturation. This is Ankyrin repeat, SAM and basic leucine zipper domain-containing protein 1 (ASZ1) from Colobus guereza (Mantled guereza).